Reading from the N-terminus, the 205-residue chain is Holliday junction branch migration complex subunit RuvA (205 aa).

A domain I region spans residues 1–64; that stretch reads MIGRLNGILV…EDAQLLFGFN (64 aa). A domain II region spans residues 65 to 143; it reads NKVERALFRE…NWGNDLFTPF (79 aa). The segment at 144-156 is flexible linker; that stretch reads SDSAVIEPFSDAT. Positions 157-205 are domain III; sequence IANNAADDAVSALVSLGYKLPQAQKAVKSVSKPDMSTEVLIKESLKSML.

The protein belongs to the RuvA family. Homotetramer. Forms an RuvA(8)-RuvB(12)-Holliday junction (HJ) complex. HJ DNA is sandwiched between 2 RuvA tetramers; dsDNA enters through RuvA and exits via RuvB. An RuvB hexamer assembles on each DNA strand where it exits the tetramer. Each RuvB hexamer is contacted by two RuvA subunits (via domain III) on 2 adjacent RuvB subunits; this complex drives branch migration. In the full resolvosome a probable DNA-RuvA(4)-RuvB(12)-RuvC(2) complex forms which resolves the HJ.

The protein localises to the cytoplasm. Functionally, the RuvA-RuvB-RuvC complex processes Holliday junction (HJ) DNA during genetic recombination and DNA repair, while the RuvA-RuvB complex plays an important role in the rescue of blocked DNA replication forks via replication fork reversal (RFR). RuvA specifically binds to HJ cruciform DNA, conferring on it an open structure. The RuvB hexamer acts as an ATP-dependent pump, pulling dsDNA into and through the RuvAB complex. HJ branch migration allows RuvC to scan DNA until it finds its consensus sequence, where it cleaves and resolves the cruciform DNA. In Pseudoalteromonas translucida (strain TAC 125), this protein is Holliday junction branch migration complex subunit RuvA.